The sequence spans 778 residues: ATP-dependent RNA helicase dbp7 (778 aa).

A disordered region spans residues 20-144 (QTKIKGGSWR…PMEDAKPTNA (125 aa)). A compositionally biased stretch (basic and acidic residues) spans 47-58 (RTADGDGNKDGN). Polar residues predominate over residues 61-72 (GPRNPNRIQVSG). Residues 92–110 (QAHGQGSGQSKGPKKGQGG) are compositionally biased toward gly residues. The segment covering 125–140 (NAVEEDKNDEPMEDAK) has biased composition (basic and acidic residues). Residues 151–180 (DTFTNLGLSPTLAAHLLTKLELKAPTAIQK) carry the Q motif motif. The Helicase ATP-binding domain maps to 184 to 385 (TQLLKEETDA…EISLKDAVHI (202 aa)). ATP is bound at residue 197 to 204 (AETGSGKT). A DEAD box motif is present at residues 321 to 324 (DEGD). Residues 411–625 (QLKQSYAIVA…ALTRSTTDDI (215 aa)) form the Helicase C-terminal domain. Acidic residues predominate over residues 470–479 (LEGDNPDEGS). 2 disordered regions span residues 470–503 (LEGD…TVAP) and 700–778 (GKIN…FNLA). 2 stretches are compositionally biased toward basic and acidic residues: residues 480 to 492 (DSEH…KEKP) and 709 to 724 (PGKE…ERKS).

Belongs to the DEAD box helicase family. DDX31/DBP7 subfamily.

It is found in the nucleus. The protein resides in the nucleolus. It catalyses the reaction ATP + H2O = ADP + phosphate + H(+). In terms of biological role, ATP-binding RNA helicase involved in the biogenesis of 60S ribosomal subunits and is required for the normal formation of 25S and 5.8S rRNAs. The polypeptide is ATP-dependent RNA helicase dbp7 (dbp7) (Emericella nidulans (strain FGSC A4 / ATCC 38163 / CBS 112.46 / NRRL 194 / M139) (Aspergillus nidulans)).